Here is a 154-residue protein sequence, read N- to C-terminus: D-aminoacyl-tRNA deacylase (154 aa).

Positions 142 to 143 (GP) match the Gly-cisPro motif, important for rejection of L-amino acids motif.

It belongs to the DTD family. In terms of assembly, homodimer.

The protein localises to the cytoplasm. It carries out the reaction glycyl-tRNA(Ala) + H2O = tRNA(Ala) + glycine + H(+). The enzyme catalyses a D-aminoacyl-tRNA + H2O = a tRNA + a D-alpha-amino acid + H(+). In terms of biological role, an aminoacyl-tRNA editing enzyme that deacylates mischarged D-aminoacyl-tRNAs. Also deacylates mischarged glycyl-tRNA(Ala), protecting cells against glycine mischarging by AlaRS. Acts via tRNA-based rather than protein-based catalysis; rejects L-amino acids rather than detecting D-amino acids in the active site. By recycling D-aminoacyl-tRNA to D-amino acids and free tRNA molecules, this enzyme counteracts the toxicity associated with the formation of D-aminoacyl-tRNA entities in vivo and helps enforce protein L-homochirality. The chain is D-aminoacyl-tRNA deacylase from Polaromonas naphthalenivorans (strain CJ2).